Reading from the N-terminus, the 77-residue chain is U8-lycotoxin-Ls1n (77 aa).

The signal sequence occupies residues 1–20 (MKLMIFTGLVLFAIVSLIEA). A propeptide spanning residues 21-26 (QAENEK) is cleaved from the precursor.

This sequence belongs to the neurotoxin 19 (CSTX) family. 08 (U8-Lctx) subfamily. In terms of processing, contains 4 disulfide bonds. As to expression, expressed by the venom gland.

It localises to the secreted. This chain is U8-lycotoxin-Ls1n, found in Lycosa singoriensis (Wolf spider).